A 1244-amino-acid polypeptide reads, in one-letter code: Protein MMS22-like (1244 aa).

Belongs to the MMS22 family. MMS22L subfamily. Component of the MMS22L-TONSL complex, a complex at least composed of MMS22L and TONSL/NFKBIL2. Interacts with RAD51; interaction is direct. In terms of processing, degraded by the ubiquitin-proteasome system upon replication stress.

It is found in the nucleus. The protein localises to the chromosome. Component of the MMS22L-TONSL complex, a complex that promotes homologous recombination-mediated repair of double-strand breaks (DSBs) at stalled or collapsed replication forks. The MMS22L-TONSL complex is required to maintain genome integrity during DNA replication. It mediates the assembly of RAD51 filaments on single-stranded DNA (ssDNA): the MMS22L-TONSL complex is recruited to DSBs following histone replacement by histone chaperones and eviction of the replication protein A complex (RPA/RP-A) from DSBs. Following recruitment to DSBs, the TONSL-MMS22L complex promotes recruitment of RAD51 filaments and subsequent homologous recombination. Within the complex, MMS22L acts by binding ssDNA. This chain is Protein MMS22-like (MMS22L), found in Bos taurus (Bovine).